Here is a 341-residue protein sequence, read N- to C-terminus: UDP-3-O-acylglucosamine N-acyltransferase (341 aa).

His-239 serves as the catalytic Proton acceptor.

Belongs to the transferase hexapeptide repeat family. LpxD subfamily. As to quaternary structure, homotrimer.

The enzyme catalyses a UDP-3-O-[(3R)-3-hydroxyacyl]-alpha-D-glucosamine + a (3R)-hydroxyacyl-[ACP] = a UDP-2-N,3-O-bis[(3R)-3-hydroxyacyl]-alpha-D-glucosamine + holo-[ACP] + H(+). It participates in bacterial outer membrane biogenesis; LPS lipid A biosynthesis. Catalyzes the N-acylation of UDP-3-O-acylglucosamine using 3-hydroxyacyl-ACP as the acyl donor. Is involved in the biosynthesis of lipid A, a phosphorylated glycolipid that anchors the lipopolysaccharide to the outer membrane of the cell. This Photobacterium profundum (strain SS9) protein is UDP-3-O-acylglucosamine N-acyltransferase.